We begin with the raw amino-acid sequence, 192 residues long: Thioredoxin-like 3-2, chloroplastic (192 aa).

A chloroplast-targeting transit peptide spans 1–55 (MSEIVNLSSSLRSLNPKISPLVPPYRQTSSSFSRPRNFKYHSFTDKICLAAERIR). The 126-residue stretch at 66-191 (LQELDDSPVS…VREMIENDSI (126 aa)) folds into the Thioredoxin domain. Active-site nucleophile residues include Cys110 and Cys113. Cys110 and Cys113 are oxidised to a cystine.

The protein belongs to the thioredoxin family.

The protein resides in the plastid. It is found in the chloroplast stroma. In terms of biological role, probable thiol-disulfide oxidoreductase that may participate in various redox reactions. In Arabidopsis thaliana (Mouse-ear cress), this protein is Thioredoxin-like 3-2, chloroplastic (WCRKC2).